The following is a 180-amino-acid chain: Signal peptidase complex subunit 3 (180 aa).

Residues 1–11 lie on the Cytoplasmic side of the membrane; that stretch reads MNTVLSRANSL. Residues 12–32 form a helical; Signal-anchor for type II membrane protein membrane-spanning segment; sequence FAFSLSVMAALTFGCFITTAF. Over 33 to 180 the chain is Lumenal; that stretch reads KERSVPVSIA…PDTYETTKSY (148 aa). Residue Asn141 is glycosylated (N-linked (GlcNAc...) asparagine).

This sequence belongs to the SPCS3 family. Component of the signal peptidase complex paralog A (SPC-A) composed of a catalytic subunit SEC11A and three accessory subunits SPCS1, SPCS2 and SPCS3. Component of the signal peptidase complex paralog C (SPC-C) composed of a catalytic subunit SEC11C and three accessory subunits SPCS1, SPCS2 and SPCS3. The complex induces a local thinning of the ER membrane which is used to measure the length of the signal peptide (SP) h-region of protein substrates. This ensures the selectivity of the complex towards h-regions shorter than 18-20 amino acids. As to expression, expressed in hen oviduct (at protein level).

It localises to the endoplasmic reticulum membrane. Its function is as follows. Essential component of the signal peptidase complex (SPC) which catalyzes the cleavage of N-terminal signal sequences from nascent proteins as they are translocated into the lumen of the endoplasmic reticulum. Essential for the SPC catalytic activity, possibly by stabilizing and positioning the active center of the complex close to the lumenal surface. This chain is Signal peptidase complex subunit 3, found in Gallus gallus (Chicken).